We begin with the raw amino-acid sequence, 287 residues long: N-methyltransferase verN (287 aa).

Belongs to the methyltransferase superfamily. LaeA methyltransferase family.

It functions in the pathway mycotoxin biosynthesis. In terms of biological role, N-methyltransferase; part of the gene cluster that mediates the biosynthesis of 11'-deoxyverticillin A, one of the dimeric epipolythiodioxopiperazines (ETPs) from the verticillin family that act as mycotoxins. 11'-deoxyverticillin A is required for normal conidiation. The nonribosomal peptide synthetase verP is speculated to be responsible for condensation of amino acids to form the carbon skeleton of verticillin, whereas the cluster-specific tailoring enzymes are involved in further modifications leading to the production of 11'-deoxyverticillin A. In Clonostachys rogersoniana, this protein is N-methyltransferase verN.